Consider the following 106-residue polypeptide: MSNFIPGEIIPEKGEIELNLGKEIRTVTVSNSGDRPVQVGSHYHFFEANKALIFDRKITFGMRLNIPAGTAIRFEPGDTTDVKLVPFSGLRNVYGFNSLVNGSLDN.

It belongs to the urease beta subunit family. Heterotrimer of UreA (gamma), UreB (beta) and UreC (alpha) subunits. Three heterotrimers associate to form the active enzyme.

The protein resides in the cytoplasm. It carries out the reaction urea + 2 H2O + H(+) = hydrogencarbonate + 2 NH4(+). Its pathway is nitrogen metabolism; urea degradation; CO(2) and NH(3) from urea (urease route): step 1/1. The sequence is that of Urease subunit beta from Prochlorococcus marinus (strain MIT 9215).